The chain runs to 483 residues: Aspartyl/glutamyl-tRNA(Asn/Gln) amidotransferase subunit B (483 aa).

It belongs to the GatB/GatE family. GatB subfamily. As to quaternary structure, heterotrimer of A, B and C subunits.

It catalyses the reaction L-glutamyl-tRNA(Gln) + L-glutamine + ATP + H2O = L-glutaminyl-tRNA(Gln) + L-glutamate + ADP + phosphate + H(+). The enzyme catalyses L-aspartyl-tRNA(Asn) + L-glutamine + ATP + H2O = L-asparaginyl-tRNA(Asn) + L-glutamate + ADP + phosphate + 2 H(+). Its function is as follows. Allows the formation of correctly charged Asn-tRNA(Asn) or Gln-tRNA(Gln) through the transamidation of misacylated Asp-tRNA(Asn) or Glu-tRNA(Gln) in organisms which lack either or both of asparaginyl-tRNA or glutaminyl-tRNA synthetases. The reaction takes place in the presence of glutamine and ATP through an activated phospho-Asp-tRNA(Asn) or phospho-Glu-tRNA(Gln). This is Aspartyl/glutamyl-tRNA(Asn/Gln) amidotransferase subunit B from Marinobacter nauticus (strain ATCC 700491 / DSM 11845 / VT8) (Marinobacter aquaeolei).